We begin with the raw amino-acid sequence, 425 residues long: Histidinol dehydrogenase (425 aa).

3 residues coordinate substrate: serine 231, glutamine 253, and histidine 256. Zn(2+)-binding residues include glutamine 253 and histidine 256. Active-site proton acceptor residues include glutamate 321 and histidine 322. Residues histidine 322, aspartate 355, glutamate 409, and histidine 414 each contribute to the substrate site. Zn(2+) is bound at residue aspartate 355. Histidine 414 lines the Zn(2+) pocket.

This sequence belongs to the histidinol dehydrogenase family. Requires Zn(2+) as cofactor.

It catalyses the reaction L-histidinol + 2 NAD(+) + H2O = L-histidine + 2 NADH + 3 H(+). It participates in amino-acid biosynthesis; L-histidine biosynthesis; L-histidine from 5-phospho-alpha-D-ribose 1-diphosphate: step 9/9. Catalyzes the sequential NAD-dependent oxidations of L-histidinol to L-histidinaldehyde and then to L-histidine. The polypeptide is Histidinol dehydrogenase (Carboxydothermus hydrogenoformans (strain ATCC BAA-161 / DSM 6008 / Z-2901)).